Consider the following 411-residue polypeptide: Adenylosuccinate synthetase (411 aa).

GTP-binding positions include 11–17 and 39–41; these read GDEGKGK and GHT. Aspartate 12 functions as the Proton acceptor in the catalytic mechanism. The Mg(2+) site is built by aspartate 12 and glycine 39. IMP contacts are provided by residues 12–15, 37–40, threonine 121, arginine 135, glutamine 215, threonine 230, and arginine 294; these read DEGK and NAGH. The active-site Proton donor is the histidine 40. 290–296 is a binding site for substrate; that stretch reads TTTKRPR. GTP is bound by residues arginine 296, 322–324, and 400–402; these read KLD and STS.

This sequence belongs to the adenylosuccinate synthetase family. As to quaternary structure, homodimer. It depends on Mg(2+) as a cofactor.

It localises to the cytoplasm. It carries out the reaction IMP + L-aspartate + GTP = N(6)-(1,2-dicarboxyethyl)-AMP + GDP + phosphate + 2 H(+). It participates in purine metabolism; AMP biosynthesis via de novo pathway; AMP from IMP: step 1/2. In terms of biological role, plays an important role in the de novo pathway of purine nucleotide biosynthesis. Catalyzes the first committed step in the biosynthesis of AMP from IMP. This Helicobacter pylori (strain ATCC 700392 / 26695) (Campylobacter pylori) protein is Adenylosuccinate synthetase.